The following is a 93-amino-acid chain: Small ribosomal subunit protein uS19 (93 aa).

This sequence belongs to the universal ribosomal protein uS19 family.

Protein S19 forms a complex with S13 that binds strongly to the 16S ribosomal RNA. This is Small ribosomal subunit protein uS19 from Nautilia profundicola (strain ATCC BAA-1463 / DSM 18972 / AmH).